The primary structure comprises 619 residues: Dihydroxy-acid dehydratase (619 aa).

Mg(2+) is bound at residue Asp81. Cys122 is a binding site for [2Fe-2S] cluster. Mg(2+) contacts are provided by Asp123 and Lys124. Lys124 carries the N6-carboxylysine modification. Cys195 contacts [2Fe-2S] cluster. Glu494 provides a ligand contact to Mg(2+). Catalysis depends on Ser520, which acts as the Proton acceptor.

Belongs to the IlvD/Edd family. Homodimer. It depends on [2Fe-2S] cluster as a cofactor. The cofactor is Mg(2+).

The enzyme catalyses (2R)-2,3-dihydroxy-3-methylbutanoate = 3-methyl-2-oxobutanoate + H2O. The catalysed reaction is (2R,3R)-2,3-dihydroxy-3-methylpentanoate = (S)-3-methyl-2-oxopentanoate + H2O. It participates in amino-acid biosynthesis; L-isoleucine biosynthesis; L-isoleucine from 2-oxobutanoate: step 3/4. Its pathway is amino-acid biosynthesis; L-valine biosynthesis; L-valine from pyruvate: step 3/4. In terms of biological role, functions in the biosynthesis of branched-chain amino acids. Catalyzes the dehydration of (2R,3R)-2,3-dihydroxy-3-methylpentanoate (2,3-dihydroxy-3-methylvalerate) into 2-oxo-3-methylpentanoate (2-oxo-3-methylvalerate) and of (2R)-2,3-dihydroxy-3-methylbutanoate (2,3-dihydroxyisovalerate) into 2-oxo-3-methylbutanoate (2-oxoisovalerate), the penultimate precursor to L-isoleucine and L-valine, respectively. The polypeptide is Dihydroxy-acid dehydratase (Shewanella denitrificans (strain OS217 / ATCC BAA-1090 / DSM 15013)).